We begin with the raw amino-acid sequence, 124 residues long: Fluoride-specific ion channel FluC (124 aa).

4 helical membrane passes run 1-21 (MIAL…LRFA), 37-57 (GTLA…GLFL), 69-89 (GLIV…LDTV), and 99-119 (LALG…WAGL). Na(+)-binding residues include Gly-76 and Thr-79.

The protein belongs to the fluoride channel Fluc/FEX (TC 1.A.43) family.

The protein resides in the cell inner membrane. It carries out the reaction fluoride(in) = fluoride(out). Na(+) is not transported, but it plays an essential structural role and its presence is essential for fluoride channel function. In terms of biological role, fluoride-specific ion channel. Important for reducing fluoride concentration in the cell, thus reducing its toxicity. This Pseudomonas putida (strain ATCC 700007 / DSM 6899 / JCM 31910 / BCRC 17059 / LMG 24140 / F1) protein is Fluoride-specific ion channel FluC.